Reading from the N-terminus, the 491-residue chain is Glutamyl-tRNA(Gln) amidotransferase subunit A (491 aa).

Catalysis depends on charge relay system residues lysine 78 and serine 158. Serine 182 functions as the Acyl-ester intermediate in the catalytic mechanism.

Belongs to the amidase family. GatA subfamily. In terms of assembly, heterotrimer of A, B and C subunits.

It carries out the reaction L-glutamyl-tRNA(Gln) + L-glutamine + ATP + H2O = L-glutaminyl-tRNA(Gln) + L-glutamate + ADP + phosphate + H(+). Functionally, allows the formation of correctly charged Gln-tRNA(Gln) through the transamidation of misacylated Glu-tRNA(Gln) in organisms which lack glutaminyl-tRNA synthetase. The reaction takes place in the presence of glutamine and ATP through an activated gamma-phospho-Glu-tRNA(Gln). This is Glutamyl-tRNA(Gln) amidotransferase subunit A from Bradyrhizobium sp. (strain ORS 278).